Here is a 262-residue protein sequence, read N- to C-terminus: Fibroin light chain (262 aa).

An N-terminal signal peptide occupies residues 1–16 (MKPIFLVLLVATSAYA). Ser-19 carries the N-acetylserine; in short form modification. A disulfide bond links Cys-101 and Cys-160.

In terms of assembly, silk fibroin elementary unit consists in a disulfide-linked heavy and light chain and a p25 glycoprotein in molar ratios of 6:6:1. This results in a complex of approximately 2.3 MDa. In terms of processing, the interchain disulfide bridge is essential for the intracellular transport and secretion of fibroin. Partially N-terminally processed to yield a short form which lacks the first two residues of the long form. As to expression, produced exclusively in the posterior (PSG) section of silk glands, which are essentially modified salivary glands.

The protein resides in the secreted. It is likely that the major role of L-chain is to prevent the retention of H-chain in ER by forming the disulfide linkage. In Bombyx mori (Silk moth), this protein is Fibroin light chain (FIBL).